Reading from the N-terminus, the 285-residue chain is Bifunctional protein FolD (285 aa).

Residues 166-168 (GAS) and isoleucine 232 contribute to the NADP(+) site.

The protein belongs to the tetrahydrofolate dehydrogenase/cyclohydrolase family. In terms of assembly, homodimer.

The catalysed reaction is (6R)-5,10-methylene-5,6,7,8-tetrahydrofolate + NADP(+) = (6R)-5,10-methenyltetrahydrofolate + NADPH. It carries out the reaction (6R)-5,10-methenyltetrahydrofolate + H2O = (6R)-10-formyltetrahydrofolate + H(+). It participates in one-carbon metabolism; tetrahydrofolate interconversion. In terms of biological role, catalyzes the oxidation of 5,10-methylenetetrahydrofolate to 5,10-methenyltetrahydrofolate and then the hydrolysis of 5,10-methenyltetrahydrofolate to 10-formyltetrahydrofolate. This is Bifunctional protein FolD from Pseudoalteromonas atlantica (strain T6c / ATCC BAA-1087).